A 419-amino-acid polypeptide reads, in one-letter code: Metacaspase-1B (419 aa).

Residues 1–109 (MYHPNYNYPP…PPMEAQQFGK (109 aa)) are disordered. Residues 33–50 (SPPPPQPYYSNGYPPPSQ) show a composition bias toward pro residues. The segment covering 51 to 66 (SPHSYSPPQYPPHGQY) has biased composition (low complexity). Residues 82-93 (QYRSYHSHSPSW) show a composition bias toward polar residues. Active-site residues include His-210 and Cys-266.

This sequence belongs to the peptidase C14B family.

In terms of biological role, involved in cell death (apoptosis). The protein is Metacaspase-1B (casB) of Aspergillus oryzae (strain ATCC 42149 / RIB 40) (Yellow koji mold).